The following is a 345-amino-acid chain: CCAAT/enhancer-binding protein beta (345 aa).

Residues 1–24 (MQRLVAWDPACLPLPPPPPAFKSM) form a required for Lys-174 sumoylation region. R3 carries the asymmetric dimethylarginine; by CARM1 modification. Residues 24–135 (MEVANFYYEA…YGGKNCKKPA (112 aa)) are required for MYC transcriptional repression. The residue at position 43 (K43) is an N6-acetyllysine; alternate. The residue at position 43 (K43) is an N6-methylated lysine; alternate. Disordered stretches follow at residues 46 to 67 (PAAPPAARPGPRPPAGELGSIG) and 79 to 116 (LEPLGAPQAPAPATATDTFEAAPPAPAPAPASSGQHHD). Positions 47–59 (AAPPAARPGPRPP) are enriched in pro residues. Residues 84–100 (APQAPAPATATDTFEAA) show a composition bias toward low complexity. The 9aaTAD motif lies at 116–124 (DFLSDLFSD). N6-acetyllysine; by KAT2A and KAT2B occurs at positions 129 and 132. K133 bears the N6-acetyllysine; by KAT2A and KAT2B; alternate mark. K133 is covalently cross-linked (Glycyl lysine isopeptide (Lys-Gly) (interchain with G-Cter in SUMO2); alternate). The interval 157–178 (FAPLHPPPPPPPPPAELKAEPG) is disordered. Residues 160-171 (LHPPPPPPPPPA) show a composition bias toward pro residues. A Glycyl lysine isopeptide (Lys-Gly) (interchain with G-Cter in SUMO2); alternate cross-link involves residue K174. K174 is covalently cross-linked (Glycyl lysine isopeptide (Lys-Gly) (interchain with G-Cter in SUMO); alternate). Residues K185 and K187 each participate in a glycyl lysine isopeptide (Lys-Gly) (interchain with G-Cter in SUMO2) cross-link. A compositionally biased stretch (low complexity) spans 218–232 (SGSSGSLSTSSSSSP). Residues 218-271 (SGSSGSLSTSSSSSPPGTPSPADAKAPPTACYAGAAPAPSQVKSKAKKTVDKHS) are disordered. T226 carries the phosphothreonine; by GSK3-beta modification. 2 O-linked (GlcNAc) serine glycosylation sites follow: S227 and S228. The residue at position 231 (S231) is a Phosphoserine; by GSK3-beta. T235 carries the phosphothreonine; by RPS6KA1, CDK2 and MAPK modification. Residues K260 and K262 each participate in a glycyl lysine isopeptide (Lys-Gly) (interchain with G-Cter in SUMO2) cross-link. T266 is modified (phosphothreonine; by RPS6KA1 and PKC/PRKCA). In terms of domain architecture, bZIP spans 271–334 (SDEYKIRRER…STLRNLFKQL (64 aa)). Residues 275-295 (KIRRERNNIAVRKSRDKAKMR) form a basic motif region. At S288 the chain carries Phosphoserine; by PKC/PRKCA. Residues 297–304 (LETQHKVL) form a leucine-zipper region. S325 carries the post-translational modification Phosphoserine; by CaMK2. K332 participates in a covalent cross-link: Glycyl lysine isopeptide (Lys-Gly) (interchain with G-Cter in SUMO2).

Belongs to the bZIP family. C/EBP subfamily. Binds DNA as a homodimer and as a heterodimer. Interacts with ATF4. Binds DNA as a heterodimer with ATF4. Interacts with MYB; within the complex, MYB and CEBPB bind to different promoter regions. Can form stable heterodimers with CEBPD. Can form stable heterodimers with CEBPA and CEBPE. Interacts with SIX1. Isoform 2 and isoform 3 also form heterodimers. Interacts with TRIM28 and PTGES2. Interacts with PRDM16. Interacts with CCDC85B. Forms a complex with THOC5. Interacts with ZNF638; this interaction increases transcriptional activation. Interacts with CIDEA and CIDEC; these interactions increase transcriptional activation of a subset of CEBPB downstream target genes. Interacts with DDIT3/CHOP. Interacts with EP300; recruits EP300 to chromatin. Interacts with RORA; the interaction disrupts interaction with EP300. Interacts (not methylated) with MED23, MED26, SMARCA2, SMARCB1 and SMARCC1. Interacts with KAT2A and KAT2B. Interacts with ATF5; EP300 is required for ATF5 and CEBPB interaction and DNA binding. Interacts with NFE2L1; the heterodimer represses expression of DSPP during odontoblast differentiation. In terms of processing, methylated. Methylation at Arg-3 by CARM1 and at Lys-43 by EHMT2 inhibit transactivation activity. Methylation is probably inhibited by phosphorylation at Thr-235. Post-translationally, sumoylated by polymeric chains of SUMO2 or SUMO3. Sumoylation at Lys-174 is required for inhibition of T-cells proliferation. In adipocytes, sumoylation at Lys-174 by PIAS1 leads to ubiquitination and subsequent proteasomal degradation. Desumoylated by SENP2, which abolishes ubiquitination and stabilizes protein levels. Ubiquitinated, leading to proteasomal degradation. In terms of processing, phosphorylated at Thr-235 by MAPK and CDK2, serves to prime phosphorylation at Thr-226 and Ser-231 by GSK3B and acquire DNA-binding as well as transactivation activities, required to induce adipogenesis. MAPK and CDK2 act sequentially to maintain Thr-235 in the primed phosphorylated state during mitotical cloning expansion and thereby progression of terminal differentiation. Phosphorylation at Thr-266 enhances transactivation activity. Phosphorylation at Ser-325 in response to calcium increases transactivation activity. Phosphorylated at Thr-235 by RPS6KA1. Post-translationally, O-glycosylated, glycosylation at Ser-227 and Ser-228 prevents phosphorylation on Thr-235, Ser-231 and Thr-226 and DNA binding activity which delays the adipocyte differentiation program. Acetylated. Acetylation at Lys-43 is an important and dynamic regulatory event that contributes to its ability to transactivate target genes, including those associated with adipogenesis and adipocyte function. Deacetylation by HDAC1 represses its transactivation activity. Acetylated by KAT2A and KAT2B within a cluster of lysine residues between amino acids 129-133, this acetylation is strongly induced by glucocorticoid treatment and enhances transactivation activity. In terms of tissue distribution, expressed at low levels in the lung, kidney and spleen.

The protein localises to the nucleus. It localises to the cytoplasm. Important transcription factor regulating the expression of genes involved in immune and inflammatory responses. Also plays a significant role in adipogenesis, as well as in the gluconeogenic pathway, liver regeneration, and hematopoiesis. The consensus recognition site is 5'-T[TG]NNGNAA[TG]-3'. Its functional capacity is governed by protein interactions and post-translational protein modifications. During early embryogenesis, plays essential and redundant roles with CEBPA. Has a promitotic effect on many cell types such as hepatocytes and adipocytes but has an antiproliferative effect on T-cells by repressing MYC expression, facilitating differentiation along the T-helper 2 lineage. Binds to regulatory regions of several acute-phase and cytokines genes and plays a role in the regulation of acute-phase reaction and inflammation. Also plays a role in intracellular bacteria killing. During adipogenesis, is rapidly expressed and, after activation by phosphorylation, induces CEBPA and PPARG, which turn on the series of adipocyte genes that give rise to the adipocyte phenotype. The delayed transactivation of the CEBPA and PPARG genes by CEBPB appears necessary to allow mitotic clonal expansion and thereby progression of terminal differentiation. Essential for female reproduction because of a critical role in ovarian follicle development. Restricts osteoclastogenesis: together with NFE2L1; represses expression of DSPP during odontoblast differentiation. Functionally, essential for gene expression induction in activated macrophages. Plays a major role in immune responses such as CD4(+) T-cell response, granuloma formation and endotoxin shock. Not essential for intracellular bacteria killing. In terms of biological role, acts as a dominant negative through heterodimerization with isoform 2. Promotes osteoblast differentiation and osteoclastogenesis. The sequence is that of CCAAT/enhancer-binding protein beta from Homo sapiens (Human).